A 61-amino-acid polypeptide reads, in one-letter code: Small ribosomal subunit protein uS14 (61 aa).

Cys-24, Cys-27, Cys-40, and Cys-43 together coordinate Zn(2+).

This sequence belongs to the universal ribosomal protein uS14 family. Zinc-binding uS14 subfamily. As to quaternary structure, part of the 30S ribosomal subunit. Contacts proteins S3 and S10. Requires Zn(2+) as cofactor.

Its function is as follows. Binds 16S rRNA, required for the assembly of 30S particles and may also be responsible for determining the conformation of the 16S rRNA at the A site. In Staphylococcus carnosus (strain TM300), this protein is Small ribosomal subunit protein uS14.